Here is a 332-residue protein sequence, read N- to C-terminus: Glyceraldehyde-3-phosphate dehydrogenase 2 (332 aa).

NAD(+) contacts are provided by residues 11–12 (RI), Asp-32, and Arg-77. Residues 148–150 (SCT), Thr-179, 208–209 (TG), and Arg-231 each bind D-glyceraldehyde 3-phosphate. The Nucleophile role is filled by Cys-149. Tyr-273 bears the Phosphotyrosine mark. Phosphothreonine is present on Thr-274. Asn-313 lines the NAD(+) pocket.

Belongs to the glyceraldehyde-3-phosphate dehydrogenase family. Homotetramer.

It localises to the cytoplasm. The enzyme catalyses D-glyceraldehyde 3-phosphate + phosphate + NAD(+) = (2R)-3-phospho-glyceroyl phosphate + NADH + H(+). The protein operates within carbohydrate degradation; glycolysis; pyruvate from D-glyceraldehyde 3-phosphate: step 1/5. This is Glyceraldehyde-3-phosphate dehydrogenase 2 (Gapdh2) from Drosophila melanogaster (Fruit fly).